The chain runs to 335 residues: Holliday junction branch migration complex subunit RuvB (335 aa).

The interval 4–183 (ADNLNVTSII…FGIVQRLEFY (180 aa)) is large ATPase domain (RuvB-L). ATP is bound by residues R23, G64, K67, T68, T69, 130-132 (EDY), R173, Y183, and R220. T68 provides a ligand contact to Mg(2+). The interval 184 to 254 (PTKDLQNIIS…VAMNALNMLN (71 aa)) is small ATPAse domain (RuvB-S). Residues 257 to 335 (TAGFNFMDRQ…HFSLKQSRDI (79 aa)) are head domain (RuvB-H). DNA-binding residues include R293, R312, and R317.

Belongs to the RuvB family. Homohexamer. Forms an RuvA(8)-RuvB(12)-Holliday junction (HJ) complex. HJ DNA is sandwiched between 2 RuvA tetramers; dsDNA enters through RuvA and exits via RuvB. An RuvB hexamer assembles on each DNA strand where it exits the tetramer. Each RuvB hexamer is contacted by two RuvA subunits (via domain III) on 2 adjacent RuvB subunits; this complex drives branch migration. In the full resolvosome a probable DNA-RuvA(4)-RuvB(12)-RuvC(2) complex forms which resolves the HJ.

The protein resides in the cytoplasm. The catalysed reaction is ATP + H2O = ADP + phosphate + H(+). The RuvA-RuvB-RuvC complex processes Holliday junction (HJ) DNA during genetic recombination and DNA repair, while the RuvA-RuvB complex plays an important role in the rescue of blocked DNA replication forks via replication fork reversal (RFR). RuvA specifically binds to HJ cruciform DNA, conferring on it an open structure. The RuvB hexamer acts as an ATP-dependent pump, pulling dsDNA into and through the RuvAB complex. RuvB forms 2 homohexamers on either side of HJ DNA bound by 1 or 2 RuvA tetramers; 4 subunits per hexamer contact DNA at a time. Coordinated motions by a converter formed by DNA-disengaged RuvB subunits stimulates ATP hydrolysis and nucleotide exchange. Immobilization of the converter enables RuvB to convert the ATP-contained energy into a lever motion, pulling 2 nucleotides of DNA out of the RuvA tetramer per ATP hydrolyzed, thus driving DNA branch migration. The RuvB motors rotate together with the DNA substrate, which together with the progressing nucleotide cycle form the mechanistic basis for DNA recombination by continuous HJ branch migration. Branch migration allows RuvC to scan DNA until it finds its consensus sequence, where it cleaves and resolves cruciform DNA. The polypeptide is Holliday junction branch migration complex subunit RuvB (Baumannia cicadellinicola subsp. Homalodisca coagulata).